A 302-amino-acid chain; its full sequence is ATP synthase subunit a (302 aa).

7 helical membrane passes run 61-81 (VDSLAWSGGLGIIMCLLFWLG), 119-139 (IAPLSLVIFCWVFLMNLMDLI), 148-168 (FEWVMVTFFGWSAHEAYFKIV), 172-192 (DPNITLGMSFSVMFLIIFLTI), 214-234 (PVVKALLIPINLLLETIALLA), 252-272 (FVFILLAAMMGTWQFIGAWPW), and 273-293 (AVFHILVITLQAFIFMVLTIV).

Belongs to the ATPase A chain family. F-type ATPases have 2 components, CF(1) - the catalytic core - and CF(0) - the membrane proton channel. CF(1) has five subunits: alpha(3), beta(3), gamma(1), delta(1), epsilon(1). CF(0) has three main subunits: a(1), b(2) and c(9-12). The alpha and beta chains form an alternating ring which encloses part of the gamma chain. CF(1) is attached to CF(0) by a central stalk formed by the gamma and epsilon chains, while a peripheral stalk is formed by the delta and b chains.

It localises to the cell inner membrane. In terms of biological role, key component of the proton channel; it plays a direct role in the translocation of protons across the membrane. In Alcanivorax borkumensis (strain ATCC 700651 / DSM 11573 / NCIMB 13689 / SK2), this protein is ATP synthase subunit a.